A 1262-amino-acid chain; its full sequence is Tau-tubulin kinase homolog Asator (1262 aa).

The disordered stretch occupies residues 13 to 35 (NASAPDDGNQSCQPSSKQDQYLS). The span at 20 to 35 (GNQSCQPSSKQDQYLS) shows a compositional bias: polar residues. A Protein kinase domain is found at 173–436 (WKVVRKIGGG…MLIGLFERCM (264 aa)). Residues 179 to 187 (IGGGGFGEI) and Lys-202 contribute to the ATP site. Asp-293 functions as the Proton acceptor in the catalytic mechanism. 3 disordered regions span residues 662-724 (TVTN…TSNA), 755-792 (RSATSTNLRPSSSASQRINSGSTIGGAVGNGSNTARSS), and 984-1003 (KDSALQLNSTNDSLDKSRHR). A compositionally biased stretch (basic and acidic residues) spans 667-679 (KTSEVNRSTEEQK). The segment covering 755 to 776 (RSATSTNLRPSSSASQRINSGS) has biased composition (polar residues).

Belongs to the protein kinase superfamily. CK1 Ser/Thr protein kinase family. Interacts with Mgtor. Mg(2+) is required as a cofactor. As to expression, detected in larval brain.

The protein resides in the cytoplasm. It localises to the cytoskeleton. It is found in the spindle. The enzyme catalyses L-seryl-[protein] + ATP = O-phospho-L-seryl-[protein] + ADP + H(+). It catalyses the reaction L-threonyl-[protein] + ATP = O-phospho-L-threonyl-[protein] + ADP + H(+). In terms of biological role, probable serine/threonine protein kinase. The chain is Tau-tubulin kinase homolog Asator from Drosophila melanogaster (Fruit fly).